The following is a 73-amino-acid chain: uncharacterized protein (73 aa).

A signal peptide spans 1-28 (MKFLLSVIAGLLILALYLFWKVQPPVWI).

This is an uncharacterized protein from Bacillus subtilis (strain 168).